The following is a 213-amino-acid chain: Small ribosomal subunit protein uS5 (213 aa).

Residues 1 to 42 (MSERDRNGGRSADNNRNDRNERGGRNDRGGRNDRRNNQQDER) are disordered. The S5 DRBM domain maps to 45 to 108 (YIERVVTINR…EEARKNFFRV (64 aa)).

The protein belongs to the universal ribosomal protein uS5 family. Part of the 30S ribosomal subunit. Contacts proteins S4 and S8.

In terms of biological role, with S4 and S12 plays an important role in translational accuracy. Located at the back of the 30S subunit body where it stabilizes the conformation of the head with respect to the body. The protein is Small ribosomal subunit protein uS5 of Corynebacterium urealyticum (strain ATCC 43042 / DSM 7109).